The sequence spans 84 residues: U4-theraphotoxin-Hhn1b (84 aa).

The N-terminal stretch at 1 to 22 is a signal peptide; sequence MKVTLIAILTCAAVLVLHTTAA. A propeptide spanning residues 23-47 is cleaved from the precursor; the sequence is EELEESQLMEVGMPDTELAAVDEER. Intrachain disulfides connect C51/C65, C55/C76, and C70/C81.

This sequence belongs to the neurotoxin 12 (Hwtx-2) family. 02 (Hwtx-2) subfamily. As to expression, expressed by the venom gland.

It localises to the secreted. Functionally, postsynaptic neurotoxin. This Cyriopagopus hainanus (Chinese bird spider) protein is U4-theraphotoxin-Hhn1b.